Consider the following 116-residue polypeptide: uncharacterized protein (116 aa).

The N-terminal stretch at 1–21 is a signal peptide; that stretch reads MAPSTAMLIMGLLKLPRLRLA.

This is an uncharacterized protein from Saccharomyces cerevisiae (strain ATCC 204508 / S288c) (Baker's yeast).